Here is an 89-residue protein sequence, read N- to C-terminus: Teretoxin Tan22.12 (89 aa).

The first 22 residues, 1–22 (MKVLFTLAMIVVTLCLGQRMRR), serve as a signal peptide directing secretion.

The protein belongs to the teretoxin C (TC) superfamily. In terms of processing, contains 4 disulfide bonds. As to expression, expressed by the venom duct.

The protein localises to the secreted. This Terebra anilis (Auger snail) protein is Teretoxin Tan22.12.